Reading from the N-terminus, the 288-residue chain is MKAVAFPAKIANLSFPSNCCSLFFRSPATFLSPALPCRKLTKGIRGLEGLMSQCLSSSSQSLSFSSNSFSSQPESELLQALPSSKPKSPPLQLPWLIVGLGNPGKKYQGTRHNVGFEMVDALADAEGISMNTVNFKALFGKGVIGNIPIMLAKPQTFMNLSGESVGQIVSFYKIPLKQVLVVYDDLDLPFGKLRLLPKGGHGGHNGMRSIIDRLKGSRDFPRLRIGIGRPPGKMDTANFVLRQFNRQEQEELDHTFQTGLEAIRILLLEGFNKSATFVNTRKSMEQLS.

The N-terminal 55 residues, 1 to 55, are a transit peptide targeting the chloroplast; that stretch reads MKAVAFPAKIANLSFPSNCCSLFFRSPATFLSPALPCRKLTKGIRGLEGLMSQCL. Tyr107 is a tRNA binding site. Residue His112 is the Proton acceptor of the active site. Residues Phe157, Asn159, and Asn205 each contribute to the tRNA site.

Belongs to the PTH family. Monomer.

The protein resides in the plastid. Its subcellular location is the chloroplast stroma. It carries out the reaction an N-acyl-L-alpha-aminoacyl-tRNA + H2O = an N-acyl-L-amino acid + a tRNA + H(+). Functionally, the natural substrate for this enzyme may be peptidyl-tRNAs which drop off the ribosome during protein synthesis. The protein is Peptidyl-tRNA hydrolase, chloroplastic of Arabidopsis thaliana (Mouse-ear cress).